Here is a 182-residue protein sequence, read N- to C-terminus: Homeobox protein pnx (182 aa).

Residues 1 to 34 (MHEETSNSTLQGKTSFSIADILDPAKFNGTRETR) form an important for interaction with tle3a region. A disordered region spans residues 24-63 (PAKFNGTRETREISNNRESPKTTSPTQDPSAPNIANASAA). Basic and acidic residues predominate over residues 29–43 (GTRETREISNNRESP). Low complexity predominate over residues 52–63 (PSAPNIANASAA). The segment at residues 67–126 (SKRIRTAFTLDQLRILERSFQSSHYLSVFERHCIASALGLSETQVKIWFQNRRTKWKKEL) is a DNA-binding region (homeobox).

The protein belongs to the NK-1 homeobox family. Interacts with tle3a.

Its subcellular location is the nucleus. Its function is as follows. Transcriptional repressor. Activity as a repressor is enhanced by binding to the corepressor tle3a. The sequence is that of Homeobox protein pnx from Danio rerio (Zebrafish).